A 188-amino-acid polypeptide reads, in one-letter code: Murein DD-endopeptidase MepS/Murein LD-carboxypeptidase (188 aa).

The signal sequence occupies residues 1–26; it reads MVKSQPILRYILRGIPAIAVAVLLSA. A lipid anchor (N-palmitoyl cysteine) is attached at Cys-27. Cys-27 carries the S-diacylglycerol cysteine lipid modification. Residues 64 to 185 form the NlpC/P60 domain; the sequence is VDVKSRIMDQ…KRYNEARRVL (122 aa). The Nucleophile role is filled by Cys-94. The Proton acceptor role is filled by His-145. The active site involves His-157.

It belongs to the peptidase C40 family. Monomer.

Its subcellular location is the cell outer membrane. The catalysed reaction is N-acetyl-D-glucosaminyl-N-acetylmuramoyl-L-alanyl-meso-2,6-diaminoheptanedioyl-D-alanine + H2O = N-acetyl-D-glucosaminyl-N-acetylmuramoyl-L-alanyl-meso-2,6-diaminoheptanedioate + D-alanine. It functions in the pathway cell wall biogenesis; cell wall polysaccharide biosynthesis. Its function is as follows. A murein DD-endopeptidase with specificity for D-Ala-meso-diaminopimelic acid (mDAP) cross-links. Its role is probably to cleave D-Ala-mDAP cross-links to allow insertion of new glycans and thus cell wall expansion. Functionally redundant with MepM and MepH. Also has weak LD-carboxypeptidase activity on L-mDAP-D-Ala peptide bonds. This Escherichia coli O157:H7 protein is Murein DD-endopeptidase MepS/Murein LD-carboxypeptidase (mepS).